Consider the following 205-residue polypeptide: GTP cyclohydrolase-2 (205 aa).

49 to 53 (RVHSE) is a binding site for GTP. 3 residues coordinate Zn(2+): Cys-54, Cys-65, and Cys-67. Residues Gln-70, 92–94 (EGR), and Thr-114 contribute to the GTP site. The Proton acceptor role is filled by Asp-126. Residue Arg-128 is the Nucleophile of the active site. 2 residues coordinate GTP: Thr-149 and Lys-154.

It belongs to the GTP cyclohydrolase II family. Requires Zn(2+) as cofactor.

The catalysed reaction is GTP + 4 H2O = 2,5-diamino-6-hydroxy-4-(5-phosphoribosylamino)-pyrimidine + formate + 2 phosphate + 3 H(+). Its pathway is cofactor biosynthesis; riboflavin biosynthesis; 5-amino-6-(D-ribitylamino)uracil from GTP: step 1/4. In terms of biological role, catalyzes the conversion of GTP to 2,5-diamino-6-ribosylamino-4(3H)-pyrimidinone 5'-phosphate (DARP), formate and pyrophosphate. The protein is GTP cyclohydrolase-2 of Pseudomonas syringae pv. tomato (strain ATCC BAA-871 / DC3000).